Here is a 425-residue protein sequence, read N- to C-terminus: Pyruvate dehydrogenase E1 component subunit alpha-3, chloroplastic (425 aa).

A chloroplast-targeting transit peptide spans 1–66 (MAAASSFTAA…VLPGNKAAPA (66 aa)). Residues histidine 109, tyrosine 135, arginine 136, alanine 184, isoleucine 186, aspartate 224, glycine 225, and asparagine 253 each contribute to the pyruvate site. 8 residues coordinate thiamine diphosphate: tyrosine 135, arginine 136, alanine 184, isoleucine 186, aspartate 224, glycine 225, asparagine 253, and histidine 322. Mg(2+) is bound at residue aspartate 224. Asparagine 253 serves as a coordination point for Mg(2+).

In terms of assembly, tetramer of 2 alpha and 2 beta subunits. Thiamine diphosphate is required as a cofactor. Requires Mg(2+) as cofactor.

Its subcellular location is the plastid. It is found in the chloroplast. It carries out the reaction N(6)-[(R)-lipoyl]-L-lysyl-[protein] + pyruvate + H(+) = N(6)-[(R)-S(8)-acetyldihydrolipoyl]-L-lysyl-[protein] + CO2. Functionally, the pyruvate dehydrogenase complex catalyzes the overall conversion of pyruvate to acetyl-CoA and CO(2). It contains multiple copies of three enzymatic components: pyruvate dehydrogenase (E1), dihydrolipoamide acetyltransferase (E2) and lipoamide dehydrogenase (E3). In Oryza sativa subsp. japonica (Rice), this protein is Pyruvate dehydrogenase E1 component subunit alpha-3, chloroplastic.